The chain runs to 402 residues: uncharacterized protein (402 aa).

11 helical membrane-spanning segments follow: residues 12–32 (FWLITGIIFIAFNLRPAITSV), 48–68 (GAAGFLTALPLLSFAVLSPLA), 80–100 (TLWLGLVILLIGVLTRSTGYT), 101–121 (AALFFGTALIGVGIAIGNVLL), 134–154 (GIMISLYTTSMNIFAALASGV), 168–188 (QAFLLWGGLALLALLIWIPQL), 212–232 (WYVTIFMGLQSFLFYSSIAWF), 248–268 (WMVSLMQFASLPSTFLTPVLA), 291–311 (GLLAGGSHTLLAIWMIIIGIG), 339–359 (MSQSFGYLLAAVGPIFVGYLF), and 367–387 (MPIVLLIAALIVMGAAGQGAG).

Belongs to the major facilitator superfamily. Cyanate porter (TC 2.A.1.17) family.

It localises to the cell membrane. This is an uncharacterized protein from Bacillus subtilis (strain 168).